Consider the following 216-residue polypeptide: Somatotropin (216 aa).

A signal peptide spans 1-26 (MAAGPRTSVLLAFTLLCLPWPQEAGA). Residue H45 coordinates Zn(2+). C78 and C189 are joined by a disulfide. Residue S131 is modified to Phosphoserine. Position 198 (E198) interacts with Zn(2+). C206 and C214 are joined by a disulfide.

This sequence belongs to the somatotropin/prolactin family.

Its subcellular location is the secreted. Its function is as follows. Plays an important role in growth control. Its major role in stimulating body growth is to stimulate the liver and other tissues to secrete IGF1. It stimulates both the differentiation and proliferation of myoblasts. It also stimulates amino acid uptake and protein synthesis in muscle and other tissues. This chain is Somatotropin (GH1), found in Camelus dromedarius (Dromedary).